The sequence spans 696 residues: Elongation factor G (696 aa).

A tr-type G domain is found at 8 to 290 (ERYRNIGIMA…AVLDYLPSPL (283 aa)). GTP-binding positions include 17-24 (AHIDAGKT), 88-92 (DTPGH), and 142-145 (NKMD).

It belongs to the TRAFAC class translation factor GTPase superfamily. Classic translation factor GTPase family. EF-G/EF-2 subfamily.

It localises to the cytoplasm. Functionally, catalyzes the GTP-dependent ribosomal translocation step during translation elongation. During this step, the ribosome changes from the pre-translocational (PRE) to the post-translocational (POST) state as the newly formed A-site-bound peptidyl-tRNA and P-site-bound deacylated tRNA move to the P and E sites, respectively. Catalyzes the coordinated movement of the two tRNA molecules, the mRNA and conformational changes in the ribosome. This is Elongation factor G from Nitrosomonas eutropha (strain DSM 101675 / C91 / Nm57).